The chain runs to 324 residues: Beta-ketoacyl-[acyl-carrier-protein] synthase III (324 aa).

Catalysis depends on residues Cys112 and His249. The ACP-binding stretch occupies residues 250–254; sequence QANIR. Residue Asn279 is part of the active site.

It belongs to the thiolase-like superfamily. FabH family. Homodimer.

The protein localises to the cytoplasm. It carries out the reaction malonyl-[ACP] + acetyl-CoA + H(+) = 3-oxobutanoyl-[ACP] + CO2 + CoA. Its pathway is lipid metabolism; fatty acid biosynthesis. In terms of biological role, catalyzes the condensation reaction of fatty acid synthesis by the addition to an acyl acceptor of two carbons from malonyl-ACP. Catalyzes the first condensation reaction which initiates fatty acid synthesis and may therefore play a role in governing the total rate of fatty acid production. Possesses both acetoacetyl-ACP synthase and acetyl transacylase activities. Its substrate specificity determines the biosynthesis of branched-chain and/or straight-chain of fatty acids. The chain is Beta-ketoacyl-[acyl-carrier-protein] synthase III from Streptococcus sanguinis (strain SK36).